Reading from the N-terminus, the 428-residue chain is Histidinol dehydrogenase (428 aa).

Residues Y127, Q189, and N212 each coordinate NAD(+). Residues S235, Q257, and H260 each contribute to the substrate site. Zn(2+)-binding residues include Q257 and H260. Active-site proton acceptor residues include E325 and H326. H326, D359, E413, and H418 together coordinate substrate. Position 359 (D359) interacts with Zn(2+). Zn(2+) is bound at residue H418.

Belongs to the histidinol dehydrogenase family. Requires Zn(2+) as cofactor.

The catalysed reaction is L-histidinol + 2 NAD(+) + H2O = L-histidine + 2 NADH + 3 H(+). It functions in the pathway amino-acid biosynthesis; L-histidine biosynthesis; L-histidine from 5-phospho-alpha-D-ribose 1-diphosphate: step 9/9. In terms of biological role, catalyzes the sequential NAD-dependent oxidations of L-histidinol to L-histidinaldehyde and then to L-histidine. The chain is Histidinol dehydrogenase from Prochlorococcus marinus subsp. pastoris (strain CCMP1986 / NIES-2087 / MED4).